The sequence spans 276 residues: Small ribosomal subunit protein uS2 (276 aa).

It belongs to the universal ribosomal protein uS2 family.

This is Small ribosomal subunit protein uS2 from Chlamydia abortus (strain DSM 27085 / S26/3) (Chlamydophila abortus).